The following is a 382-amino-acid chain: Protein farnesyltransferase subunit beta (382 aa).

5 PFTB repeats span residues cysteine 78–aspartate 119, arginine 129–glycine 170, phenylalanine 178–glycine 219, glutamate 226–alanine 268, and proline 286–alanine 328. Residues histidine 204–tyrosine 207 and arginine 247–lysine 250 each bind (2E,6E)-farnesyl diphosphate. Zn(2+)-binding residues include aspartate 253 and cysteine 255. Tyrosine 256–tryptophan 259 provides a ligand contact to (2E,6E)-farnesyl diphosphate. Histidine 316 serves as a coordination point for Zn(2+).

This sequence belongs to the protein prenyltransferase subunit beta family. In terms of assembly, heterodimer of an alpha(cwp1) and a beta(cpp1) subunit. Zn(2+) serves as cofactor.

It carries out the reaction L-cysteinyl-[protein] + (2E,6E)-farnesyl diphosphate = S-(2E,6E)-farnesyl-L-cysteinyl-[protein] + diphosphate. Catalyzes the transfer of a farnesyl moiety from farnesyl diphosphate to a cysteine at the fourth position from the C-terminus of several proteins. The beta(cpp1) subunit is responsible for peptide-binding. This chain is Protein farnesyltransferase subunit beta (cpp1), found in Schizosaccharomyces pombe (strain 972 / ATCC 24843) (Fission yeast).